A 276-amino-acid chain; its full sequence is Large ribosomal subunit protein uL2 (276 aa).

The interval 224–276 (AMNPIDHPHGGGEGKTSGGRNPVTPWGVSTKGKKTRKKNKSSNKYIKRVSDKG) is disordered. Basic residues predominate over residues 254–270 (KGKKTRKKNKSSNKYIK).

It belongs to the universal ribosomal protein uL2 family. In terms of assembly, part of the 50S ribosomal subunit. Forms a bridge to the 30S subunit in the 70S ribosome.

One of the primary rRNA binding proteins. Required for association of the 30S and 50S subunits to form the 70S ribosome, for tRNA binding and peptide bond formation. It has been suggested to have peptidyltransferase activity; this is somewhat controversial. Makes several contacts with the 16S rRNA in the 70S ribosome. In Ehrlichia ruminantium (strain Gardel), this protein is Large ribosomal subunit protein uL2.